We begin with the raw amino-acid sequence, 465 residues long: UDP-N-acetylmuramate--L-alanine ligase (465 aa).

112 to 118 (GTHGKTT) is an ATP binding site.

This sequence belongs to the MurCDEF family.

It localises to the cytoplasm. It catalyses the reaction UDP-N-acetyl-alpha-D-muramate + L-alanine + ATP = UDP-N-acetyl-alpha-D-muramoyl-L-alanine + ADP + phosphate + H(+). It participates in cell wall biogenesis; peptidoglycan biosynthesis. Functionally, cell wall formation. In Janthinobacterium sp. (strain Marseille) (Minibacterium massiliensis), this protein is UDP-N-acetylmuramate--L-alanine ligase.